The following is a 385-amino-acid chain: Sulfoquinovose monooxygenase (385 aa).

The disordered stretch occupies residues 366–385 (AYGRVPSETPATPLGNGERH).

The protein belongs to the SsuD family. As to quaternary structure, homodimer.

The catalysed reaction is 6-sulfo-D-quinovose + FMNH2 + O2 = 6-dehydro-D-glucose + FMN + sulfite + H2O + 2 H(+). Functionally, part of the sulfoquinovose monooxygenase (sulfo-SMO) pathway, a D-sulfoquinovose degradation pathway that enables the complete utilization of all carbons within sulfoquinovose (SQ) with concomitant production of inorganic sulfite. Catalyzes the oxidative desulfurization of sulfoquinovose to sulfite and 6-dehydro-D-glucose. Is highly specific for sulfoquinovose and cannot use sulfoquinovosyl glycerol. FMNH(2) is provided by the FMN reductase SmoA. The chain is Sulfoquinovose monooxygenase from Agrobacterium fabrum (strain C58 / ATCC 33970) (Agrobacterium tumefaciens (strain C58)).